The chain runs to 131 residues: Glycine cleavage system H protein (131 aa).

The 83-residue stretch at 24–106 folds into the Lipoyl-binding domain; sequence RAIVGISDHA…YGEGWIMVIE (83 aa). Residue Lys65 is modified to N6-lipoyllysine.

It belongs to the GcvH family. The glycine cleavage system is composed of four proteins: P, T, L and H. (R)-lipoate serves as cofactor.

Functionally, the glycine cleavage system catalyzes the degradation of glycine. The H protein shuttles the methylamine group of glycine from the P protein to the T protein. The polypeptide is Glycine cleavage system H protein (Xylella fastidiosa (strain 9a5c)).